A 199-amino-acid chain; its full sequence is NAD(P)H dehydrogenase (quinone) (199 aa).

The Flavodoxin-like domain occupies 4–190 (VLVLYYSSYG…AMARFQGGHV (187 aa)). FMN contacts are provided by residues 10 to 15 (SSYGHI) and 78 to 80 (TRF). Tyrosine 12 provides a ligand contact to NAD(+). A substrate-binding site is contributed by tryptophan 98. Residues 113-119 (STATQHG) and histidine 134 contribute to the FMN site.

The protein belongs to the WrbA family. FMN is required as a cofactor.

The enzyme catalyses a quinone + NADH + H(+) = a quinol + NAD(+). The catalysed reaction is a quinone + NADPH + H(+) = a quinol + NADP(+). This chain is NAD(P)H dehydrogenase (quinone), found in Azoarcus sp. (strain BH72).